The sequence spans 91 residues: UPF0213 protein NGO_1598 (91 aa).

Positions 4–83 (SNWSVYLILC…AAQKRQLWEQ (80 aa)) constitute a GIY-YIG domain.

This sequence belongs to the UPF0213 family.

This is UPF0213 protein NGO_1598 from Neisseria gonorrhoeae (strain ATCC 700825 / FA 1090).